The primary structure comprises 382 residues: uncharacterized protein (382 aa).

Residues 1–25 (MKKWMAAVFVMMLMLCFGGIENVKA) form the signal peptide. Serine 186 acts as the Nucleophile in catalysis. Residues aspartate 354 and histidine 357 contribute to the active site.

Belongs to the 'GDSL' lipolytic enzyme family.

This is an uncharacterized protein from Bacillus subtilis (strain 168).